The sequence spans 956 residues: DNA repair endonuclease UVH1 (956 aa).

The Nuclear localization signal signature appears at 256–272; sequence RRQLDPIWHTLGKRTKQ. 3 disordered regions span residues 343–363, 516–593, and 697–718; these read HVKN…SVEA, TTDM…RPSG, and SSTE…GGRK. Residues 697–711 show a composition bias toward polar residues; that stretch reads SSTEFPASSTQNSLT. Residues 725 to 805 form the ERCC4 domain; that stretch reads QVIVDMREFM…IPVLLIEFSQ (81 aa).

The protein belongs to the XPF family. In terms of assembly, heterodimer with ERCC1/RAD10. As to expression, isoform 1 and isoform 2 are widely expressed, predominantly in flowers, meristems and stems. Isoform 3 is detected at low levels.

It is found in the nucleus. Seems to be involved in nucleotide excision repair (NER) of damaged DNA (dark repair mechanism). Involved in repair of UV light, and probably oxidative damage. The UVH1/RAD1-ERCC1/RAD10 complex may act as an endonuclease making DNA incision 5' to the lesion site. In vitro, is implicated in double strand breaks (DSBs) repair and is required for homologous recombination in the presence of non-homologous overhangs. May mediate the induction of a DNA-damage sensitive cell-cycle checkpoint during the G2 phase. This Arabidopsis thaliana (Mouse-ear cress) protein is DNA repair endonuclease UVH1 (UVH1).